The chain runs to 472 residues: L-fuculokinase (472 aa).

The protein belongs to the FGGY kinase family. Requires a divalent metal cation as cofactor.

It carries out the reaction L-fuculose + ATP = L-fuculose 1-phosphate + ADP + H(+). It participates in carbohydrate degradation; L-fucose degradation; L-lactaldehyde and glycerone phosphate from L-fucose: step 2/3. Its function is as follows. Catalyzes the phosphorylation of L-fuculose. The polypeptide is L-fuculokinase (Escherichia coli O157:H7).